The primary structure comprises 788 residues: MSLPPHLCVPIDILMIDNFDSFTWNLYQSLCLLGADVTVIRNDAIPRSAIPQLRIKRLIVSPGPGHPQTDSGISREAIKYFAGKVPIMGVCMGLECVVDVFGGQIAYAGEIMHGKVSGIRHDARGCFKDLPQGIQSTRYHSLSAGVKTLPDELAVTAVTEHERVIMGIRHRKYTVEAVQYHPESILSESGDDLLRHFMKLKGGTWEENPEFRVLDPSLPAFEIGSQPAASTSAKIPTILEKICAQRQKDVDQAKATPGTTPEDLKTLLSMKLSPPQISFPDRLKAAEVKPALMAEVKRASPSKGPIAMNGNAAQQALTYALAGASVISVLTEPTWFKGSLLDMRLARQAIDNLPHRPAILRKDFIIDEYQIDEARLHGADTVLLIVATLTEKRLEELYAYSQSLGMEPLVEVNNAKEMEIALKLGAKVIGVNNRNLHDFNVDMGTTSRLAEMVRERDVILCALSGIKDAQDVNTYVEQGVGAVLVGESLMRAPDTRAFIRQLLSIPESEAKGKGKETTPLSRSCGIRTEEEALAAAEAGADMLGLMFVPKSKRYVSLEKAQQIAAAIHSRRLSKPVLTSGKTLENEPWFTAQQPPSRSFVWRFAARPLLVGVFQNQPLSVYLTPCVPQLDLVQLHGSEPAELAKHYPVPVIRVFHVSADGRGLADLARPGLHQFALLDAVLPGSASALSGGTGTTVDWALARDAVRSGEVRVARSAQGDGPVLSLNSSEALYPMPVILAGGPQPENVSEAVDTVAPWAVDVSGGVELEDGSGKDLEKVRAFVKAAKKL.

The region spanning 12-207 (DILMIDNFDS…MKLKGGTWEE (196 aa)) is the Glutamine amidotransferase type-1 domain. 63-65 (GPG) is an L-glutamine binding site. The Nucleophile; for GATase activity role is filled by Cys91. Position 141-142 (141-142 (SL)) interacts with L-glutamine. Active-site for GATase activity residues include His181 and Glu183. Positions 238 to 503 (ILEKICAQRQ…DTRAFIRQLL (266 aa)) are indole-3-glycerol phosphate synthase. Residues 520-788 (LSRSCGIRTE…RAFVKAAKKL (269 aa)) form an N-(5'-phosphoribosyl)anthranilate isomerase region.

The enzyme catalyses N-(5-phospho-beta-D-ribosyl)anthranilate = 1-(2-carboxyphenylamino)-1-deoxy-D-ribulose 5-phosphate. The catalysed reaction is 1-(2-carboxyphenylamino)-1-deoxy-D-ribulose 5-phosphate + H(+) = (1S,2R)-1-C-(indol-3-yl)glycerol 3-phosphate + CO2 + H2O. It carries out the reaction chorismate + L-glutamine = anthranilate + pyruvate + L-glutamate + H(+). The protein operates within amino-acid biosynthesis; L-tryptophan biosynthesis; L-tryptophan from chorismate: step 1/5. Its pathway is amino-acid biosynthesis; L-tryptophan biosynthesis; L-tryptophan from chorismate: step 3/5. It functions in the pathway amino-acid biosynthesis; L-tryptophan biosynthesis; L-tryptophan from chorismate: step 4/5. Functionally, trifunctional enzyme bearing the Gln amidotransferase (GATase) domain of anthranilate synthase, indole-glycerolphosphate synthase, and phosphoribosylanthranilate isomerase activities. In Phanerodontia chrysosporium (White-rot fungus), this protein is Multifunctional tryptophan biosynthesis protein (TRPC).